Reading from the N-terminus, the 615-residue chain is Elongation factor 4 (615 aa).

The region spanning 14–200 is the tr-type G domain; that stretch reads QQIRNFCIIA…KVAELIPAPT (187 aa). GTP is bound by residues 26-31 and 147-150; these read DHGKST and NKID.

This sequence belongs to the TRAFAC class translation factor GTPase superfamily. Classic translation factor GTPase family. LepA subfamily.

The protein resides in the cell membrane. The catalysed reaction is GTP + H2O = GDP + phosphate + H(+). In terms of biological role, required for accurate and efficient protein synthesis under certain stress conditions. May act as a fidelity factor of the translation reaction, by catalyzing a one-codon backward translocation of tRNAs on improperly translocated ribosomes. Back-translocation proceeds from a post-translocation (POST) complex to a pre-translocation (PRE) complex, thus giving elongation factor G a second chance to translocate the tRNAs correctly. Binds to ribosomes in a GTP-dependent manner. The protein is Elongation factor 4 of Corynebacterium diphtheriae (strain ATCC 700971 / NCTC 13129 / Biotype gravis).